The sequence spans 523 residues: Exodeoxyribonuclease 7 large subunit (523 aa).

Residues 502–523 form a disordered region; the sequence is PGASPAARTRAGKAKADQGSLF.

It belongs to the XseA family. Heterooligomer composed of large and small subunits.

The protein localises to the cytoplasm. The catalysed reaction is Exonucleolytic cleavage in either 5'- to 3'- or 3'- to 5'-direction to yield nucleoside 5'-phosphates.. Bidirectionally degrades single-stranded DNA into large acid-insoluble oligonucleotides, which are then degraded further into small acid-soluble oligonucleotides. In Rhodospirillum centenum (strain ATCC 51521 / SW), this protein is Exodeoxyribonuclease 7 large subunit.